A 208-amino-acid polypeptide reads, in one-letter code: Uracil phosphoribosyltransferase (208 aa).

5-phospho-alpha-D-ribose 1-diphosphate-binding positions include Arg78, Arg103, and 130 to 138 (DPMFATGGT). Residues Ile193 and 198–200 (GDA) each bind uracil. Asp199 contacts 5-phospho-alpha-D-ribose 1-diphosphate.

The protein belongs to the UPRTase family. Mg(2+) serves as cofactor.

The catalysed reaction is UMP + diphosphate = 5-phospho-alpha-D-ribose 1-diphosphate + uracil. The protein operates within pyrimidine metabolism; UMP biosynthesis via salvage pathway; UMP from uracil: step 1/1. Its activity is regulated as follows. Allosterically activated by GTP. In terms of biological role, catalyzes the conversion of uracil and 5-phospho-alpha-D-ribose 1-diphosphate (PRPP) to UMP and diphosphate. This Campylobacter jejuni (strain RM1221) protein is Uracil phosphoribosyltransferase.